A 91-amino-acid chain; its full sequence is Small ribosomal subunit protein uS19 (91 aa).

The protein belongs to the universal ribosomal protein uS19 family.

Its function is as follows. Protein S19 forms a complex with S13 that binds strongly to the 16S ribosomal RNA. In Hahella chejuensis (strain KCTC 2396), this protein is Small ribosomal subunit protein uS19.